The sequence spans 357 residues: Nicotinate-nucleotide--dimethylbenzimidazole phosphoribosyltransferase (357 aa).

Glu-323 functions as the Proton acceptor in the catalytic mechanism.

This sequence belongs to the CobT family.

The catalysed reaction is 5,6-dimethylbenzimidazole + nicotinate beta-D-ribonucleotide = alpha-ribazole 5'-phosphate + nicotinate + H(+). It functions in the pathway nucleoside biosynthesis; alpha-ribazole biosynthesis; alpha-ribazole from 5,6-dimethylbenzimidazole: step 1/2. In terms of biological role, catalyzes the synthesis of alpha-ribazole-5'-phosphate from nicotinate mononucleotide (NAMN) and 5,6-dimethylbenzimidazole (DMB). The protein is Nicotinate-nucleotide--dimethylbenzimidazole phosphoribosyltransferase of Nitratidesulfovibrio vulgaris (strain DP4) (Desulfovibrio vulgaris).